The sequence spans 370 residues: DNA replication and repair protein RecF (370 aa).

ATP is bound at residue Gly30–Thr37.

Belongs to the RecF family.

The protein resides in the cytoplasm. Its function is as follows. The RecF protein is involved in DNA metabolism; it is required for DNA replication and normal SOS inducibility. RecF binds preferentially to single-stranded, linear DNA. It also seems to bind ATP. The chain is DNA replication and repair protein RecF from Listeria monocytogenes serotype 4b (strain CLIP80459).